A 228-amino-acid polypeptide reads, in one-letter code: Large ribosomal subunit protein uL3 (228 aa).

Belongs to the universal ribosomal protein uL3 family. As to quaternary structure, part of the 50S ribosomal subunit. Forms a cluster with proteins L14 and L19.

One of the primary rRNA binding proteins, it binds directly near the 3'-end of the 23S rRNA, where it nucleates assembly of the 50S subunit. The chain is Large ribosomal subunit protein uL3 from Leuconostoc mesenteroides subsp. mesenteroides (strain ATCC 8293 / DSM 20343 / BCRC 11652 / CCM 1803 / JCM 6124 / NCDO 523 / NBRC 100496 / NCIMB 8023 / NCTC 12954 / NRRL B-1118 / 37Y).